The following is a 787-amino-acid chain: Longitudinals lacking protein, isoforms A/B/D/L (787 aa).

The region spanning 32-97 is the BTB domain; that stretch reads VDCTLAAEGK…MYRGEVNISQ (66 aa). Disordered regions lie at residues 115-200, 228-340, 506-560, and 653-677; these read LSDN…SSVL, SSGP…ASAS, AKDV…SGGK, and TTGS…SVLG. 6 stretches are compositionally biased toward low complexity: residues 162 to 175, 228 to 251, 263 to 293, 329 to 340, 537 to 560, and 659 to 668; these read SGDV…SSSP, SSGP…LTST, TSST…QTTS, NSATGPNPASAS, HSSS…SGGK, and SPSNSGHNNS. Residues 685-707 form a C2H2-type 1; degenerate zinc finger; that stretch reads HPCPVCGRVYKLKSSLRNHQKWE. The C2H2-type 2 zinc-finger motif lies at 714–737; that stretch reads FQCPFCVYRAKQKMHIGRHMERMH.

In terms of assembly, isoform D interacts with JIL-1. In terms of tissue distribution, by stage 11, isoform B is expressed throughout the mesoderm, whereas isoform A, isoform D and isoform L are expressed throughout the ectoderm. Expression becomes restricted during later stages; starting from stage 14 to 16, isoform B is expressed in muscle. Isoform A, isoform D, and at low levels isoform B, are expressed in the CNS. Expression is also seen in specific types of cells in the embryo; isoform A and isoform L are expressed in a dynamic pattern in the ventral neurogenic region starting at stage 7. Isoform L is expressed around the tracheal pits at stage 11.

It localises to the nucleus. Putative transcription factor required for axon growth and guidance in the central and peripheral nervous systems. Repels CNS axons away from the midline by promoting the expression of the midline repellent sli and its receptor robo. The protein is Longitudinals lacking protein, isoforms A/B/D/L of Drosophila melanogaster (Fruit fly).